A 257-amino-acid chain; its full sequence is Imidazole glycerol phosphate synthase subunit HisF (257 aa).

Active-site residues include D11 and D130.

Belongs to the HisA/HisF family. As to quaternary structure, heterodimer of HisH and HisF.

Its subcellular location is the cytoplasm. It catalyses the reaction 5-[(5-phospho-1-deoxy-D-ribulos-1-ylimino)methylamino]-1-(5-phospho-beta-D-ribosyl)imidazole-4-carboxamide + L-glutamine = D-erythro-1-(imidazol-4-yl)glycerol 3-phosphate + 5-amino-1-(5-phospho-beta-D-ribosyl)imidazole-4-carboxamide + L-glutamate + H(+). It functions in the pathway amino-acid biosynthesis; L-histidine biosynthesis; L-histidine from 5-phospho-alpha-D-ribose 1-diphosphate: step 5/9. IGPS catalyzes the conversion of PRFAR and glutamine to IGP, AICAR and glutamate. The HisF subunit catalyzes the cyclization activity that produces IGP and AICAR from PRFAR using the ammonia provided by the HisH subunit. This chain is Imidazole glycerol phosphate synthase subunit HisF, found in Bradyrhizobium diazoefficiens (strain JCM 10833 / BCRC 13528 / IAM 13628 / NBRC 14792 / USDA 110).